A 345-amino-acid chain; its full sequence is L-threonine 3-dehydrogenase (345 aa).

Cys-42 is a binding site for Zn(2+). Catalysis depends on charge relay system residues Thr-44 and His-47. Residues His-67, Glu-68, Cys-97, Cys-100, Cys-103, and Cys-111 each coordinate Zn(2+). Residues Ile-179, Asp-199, Arg-204, Leu-266–Ile-268, and Ile-290–Tyr-291 each bind NAD(+).

This sequence belongs to the zinc-containing alcohol dehydrogenase family. Homotetramer. It depends on Zn(2+) as a cofactor.

The protein resides in the cytoplasm. The enzyme catalyses L-threonine + NAD(+) = (2S)-2-amino-3-oxobutanoate + NADH + H(+). It functions in the pathway amino-acid degradation; L-threonine degradation via oxydo-reductase pathway; glycine from L-threonine: step 1/2. Functionally, catalyzes the NAD(+)-dependent oxidation of L-threonine to 2-amino-3-ketobutyrate. The sequence is that of L-threonine 3-dehydrogenase from Rhizobium etli (strain CIAT 652).